A 518-amino-acid polypeptide reads, in one-letter code: Beta-TrCP (518 aa).

Positions 1–12 are enriched in polar residues; that stretch reads MEGFSCSLQPPT. A disordered region spans residues 1–24; that stretch reads MEGFSCSLQPPTASEREDCNRDEP. A compositionally biased stretch (basic and acidic residues) spans 14 to 24; that stretch reads SEREDCNRDEP. The F-box domain maps to 119 to 157; it reads DHIAENILSYLDAKSLCSAELVCKEWYRVTSDGMLWKKL. 7 WD repeats span residues 230-258, 270-298, 310-338, 353-381, 393-421, 433-461, and 482-510; these read ETSK…KIWD, GHTG…RVWD, HHCE…AVWD, GHRA…KVWN, GHKR…RLWD, GHEE…KVWD, and EHSG…LIWD.

In terms of assembly, part of a SCF (SKP1-cullin-F-box) ubiquitin-protein ligase complex. Interacts with fbxo5.

Its function is as follows. Substrate recognition component of a SCF (SKP1-CUL1-F-box protein) E3 ubiquitin-protein ligase complex which mediates the ubiquitination and subsequent proteasomal degradation of target proteins. Probably recognizes and binds to phosphorylated target proteins. May participate in Wnt signaling. The protein is Beta-TrCP (fbxw1) of Xenopus laevis (African clawed frog).